Consider the following 219-residue polypeptide: Melanoma-associated antigen H1 (219 aa).

Basic residues predominate over residues Met1 to Ala13. A disordered region spans residues Met1–Phe84. In terms of domain architecture, MAGE spans Met1 to Asp198. A compositionally biased stretch (acidic residues) spans Pro44 to Thr57. Residues Pro58–Ala74 show a composition bias toward low complexity. Phosphotyrosine is present on Tyr195.

The sequence is that of Melanoma-associated antigen H1 (MAGEH1) from Homo sapiens (Human).